The following is a 160-amino-acid chain: Nutritionally-regulated adipose and cardiac enriched protein homolog (160 aa).

A disordered region spans residues 1–69 (MRTAAGAVSP…AKPQRTSRRV (69 aa)). Basic and acidic residues-rich tracts occupy residues 12-25 (SRPETRRQTRKNEE) and 33-42 (CRAEREDNRK). The helical transmembrane segment at 101-121 (GGSLLLQLCVCVLLVLALGLY) threads the bilayer.

The protein resides in the cell membrane. In Homo sapiens (Human), this protein is Nutritionally-regulated adipose and cardiac enriched protein homolog (NRAC).